The primary structure comprises 456 residues: Argininosuccinate lyase (456 aa).

This sequence belongs to the lyase 1 family. Argininosuccinate lyase subfamily.

The protein resides in the cytoplasm. It carries out the reaction 2-(N(omega)-L-arginino)succinate = fumarate + L-arginine. Its pathway is amino-acid biosynthesis; L-arginine biosynthesis; L-arginine from L-ornithine and carbamoyl phosphate: step 3/3. This chain is Argininosuccinate lyase, found in Shewanella pealeana (strain ATCC 700345 / ANG-SQ1).